Consider the following 367-residue polypeptide: Phosphoribosylaminoimidazole-succinocarboxamide synthase (367 aa).

It belongs to the SAICAR synthetase family.

The catalysed reaction is 5-amino-1-(5-phospho-D-ribosyl)imidazole-4-carboxylate + L-aspartate + ATP = (2S)-2-[5-amino-1-(5-phospho-beta-D-ribosyl)imidazole-4-carboxamido]succinate + ADP + phosphate + 2 H(+). Its pathway is purine metabolism; IMP biosynthesis via de novo pathway; 5-amino-1-(5-phospho-D-ribosyl)imidazole-4-carboxamide from 5-amino-1-(5-phospho-D-ribosyl)imidazole-4-carboxylate: step 1/2. The polypeptide is Phosphoribosylaminoimidazole-succinocarboxamide synthase (Shewanella baltica (strain OS223)).